We begin with the raw amino-acid sequence, 170 residues long: Lipoprotein signal peptidase (170 aa).

Transmembrane regions (helical) follow at residues 12–32 (WYWV…WVLA), 67–87 (WQRW…TVWL), and 93–113 (GLWR…GNLI). Catalysis depends on residues Asp123 and Asp141. The helical transmembrane segment at 133 to 153 (HFPAFNIADSAICVGAGLIIL) threads the bilayer.

It belongs to the peptidase A8 family.

It is found in the cell inner membrane. The enzyme catalyses Release of signal peptides from bacterial membrane prolipoproteins. Hydrolyzes -Xaa-Yaa-Zaa-|-(S,diacylglyceryl)Cys-, in which Xaa is hydrophobic (preferably Leu), and Yaa (Ala or Ser) and Zaa (Gly or Ala) have small, neutral side chains.. It functions in the pathway protein modification; lipoprotein biosynthesis (signal peptide cleavage). Functionally, this protein specifically catalyzes the removal of signal peptides from prolipoproteins. The polypeptide is Lipoprotein signal peptidase (Shewanella loihica (strain ATCC BAA-1088 / PV-4)).